Here is a 241-residue protein sequence, read N- to C-terminus: Biosynthetic peptidoglycan transglycosylase (241 aa).

The chain crosses the membrane as a helical span at residues 18–38 (GVIGIIALWMAGILIFAFLPV).

This sequence belongs to the glycosyltransferase 51 family.

It is found in the cell inner membrane. The enzyme catalyses [GlcNAc-(1-&gt;4)-Mur2Ac(oyl-L-Ala-gamma-D-Glu-L-Lys-D-Ala-D-Ala)](n)-di-trans,octa-cis-undecaprenyl diphosphate + beta-D-GlcNAc-(1-&gt;4)-Mur2Ac(oyl-L-Ala-gamma-D-Glu-L-Lys-D-Ala-D-Ala)-di-trans,octa-cis-undecaprenyl diphosphate = [GlcNAc-(1-&gt;4)-Mur2Ac(oyl-L-Ala-gamma-D-Glu-L-Lys-D-Ala-D-Ala)](n+1)-di-trans,octa-cis-undecaprenyl diphosphate + di-trans,octa-cis-undecaprenyl diphosphate + H(+). It functions in the pathway cell wall biogenesis; peptidoglycan biosynthesis. Peptidoglycan polymerase that catalyzes glycan chain elongation from lipid-linked precursors. The polypeptide is Biosynthetic peptidoglycan transglycosylase (Yersinia pestis bv. Antiqua (strain Antiqua)).